The primary structure comprises 79 residues: Sec-independent protein translocase protein TatA (79 aa).

The helical transmembrane segment at 1-21 (MGFSTTHLLIFLVIIIVIFGT) threads the bilayer. The interval 43–63 (KEGSDKAADAPAAAPQQVASS) is disordered. Positions 51–63 (DAPAAAPQQVASS) are enriched in low complexity.

Belongs to the TatA/E family. The Tat system comprises two distinct complexes: a TatABC complex, containing multiple copies of TatA, TatB and TatC subunits, and a separate TatA complex, containing only TatA subunits. Substrates initially bind to the TatABC complex, which probably triggers association of the separate TatA complex to form the active translocon.

Its subcellular location is the cell inner membrane. Its function is as follows. Part of the twin-arginine translocation (Tat) system that transports large folded proteins containing a characteristic twin-arginine motif in their signal peptide across membranes. TatA could form the protein-conducting channel of the Tat system. This chain is Sec-independent protein translocase protein TatA, found in Albidiferax ferrireducens (strain ATCC BAA-621 / DSM 15236 / T118) (Rhodoferax ferrireducens).